The primary structure comprises 415 residues: Extracellular signal-regulated kinase 1 (415 aa).

The 304-residue stretch at 66 to 369 (YQILEIVGEG…VEDALKHPYL (304 aa)) folds into the Protein kinase domain. Residues 72–80 (VGEGAYGIV) and lysine 95 contribute to the ATP site. Aspartate 190 acts as the Proton acceptor in catalysis. Threonine 226 is modified (phosphothreonine). The short motif at 226 to 228 (TEY) is the TXY element. A Phosphotyrosine modification is found at tyrosine 228.

The protein belongs to the protein kinase superfamily. CMGC Ser/Thr protein kinase family. MAP kinase subfamily. It depends on Mg(2+) as a cofactor. Post-translationally, dually phosphorylated on Thr-226 and Tyr-228, which activates the enzyme.

It catalyses the reaction L-seryl-[protein] + ATP = O-phospho-L-seryl-[protein] + ADP + H(+). The enzyme catalyses L-threonyl-[protein] + ATP = O-phospho-L-threonyl-[protein] + ADP + H(+). Activated by tyrosine and threonine phosphorylation. In Candida albicans (strain WO-1) (Yeast), this protein is Extracellular signal-regulated kinase 1 (CEK1).